The sequence spans 247 residues: Cytochrome c oxidase subunit 2 (247 aa).

An N-terminal signal peptide occupies residues 1 to 11; it reads MFYLLNSIIMN. The Mitochondrial intermembrane segment spans residues 12–38; that stretch reads DVPTPYGMYFQDSATPNQEGILELHDN. The helical transmembrane segment at 39–59 threads the bilayer; the sequence is IMFYLFIILGLVSWLLFTIVR. Residues 60–78 lie on the Mitochondrial matrix side of the membrane; sequence TYSKNPIAYKYIKHGQTIE. A helical membrane pass occupies residues 79–101; the sequence is IIWTIFPAVILLIIAFPSFILLY. Residues 102–247 lie on the Mitochondrial intermembrane side of the membrane; sequence LCDEVISPAM…PAFLEWLNEQ (146 aa). Histidine 182, cysteine 217, glutamate 219, cysteine 221, histidine 225, and methionine 228 together coordinate Cu cation. Residue glutamate 219 coordinates Mg(2+).

It belongs to the cytochrome c oxidase subunit 2 family. As to quaternary structure, component of the cytochrome c oxidase (complex IV, CIV), a multisubunit enzyme composed of a catalytic core of 3 subunits and several supernumerary subunits. The complex exists as a monomer or a dimer and forms supercomplexes (SCs) in the inner mitochondrial membrane with ubiquinol-cytochrome c oxidoreductase (cytochrome b-c1 complex, complex III, CIII). The cofactor is Cu cation. In terms of processing, the signal sequence of COX2 is processed by IMP1.

It localises to the mitochondrion inner membrane. It catalyses the reaction 4 Fe(II)-[cytochrome c] + O2 + 8 H(+)(in) = 4 Fe(III)-[cytochrome c] + 2 H2O + 4 H(+)(out). Component of the cytochrome c oxidase, the last enzyme in the mitochondrial electron transport chain which drives oxidative phosphorylation. The respiratory chain contains 3 multisubunit complexes succinate dehydrogenase (complex II, CII), ubiquinol-cytochrome c oxidoreductase (cytochrome b-c1 complex, complex III, CIII) and cytochrome c oxidase (complex IV, CIV), that cooperate to transfer electrons derived from NADH and succinate to molecular oxygen, creating an electrochemical gradient over the inner membrane that drives transmembrane transport and the ATP synthase. Cytochrome c oxidase is the component of the respiratory chain that catalyzes the reduction of oxygen to water. Electrons originating from reduced cytochrome c in the intermembrane space (IMS) are transferred via the dinuclear copper A center (CU(A)) of subunit 2 and heme A of subunit 1 to the active site in subunit 1, a binuclear center (BNC) formed by heme A3 and copper B (CU(B)). The BNC reduces molecular oxygen to 2 water molecules using 4 electrons from cytochrome c in the IMS and 4 protons from the mitochondrial matrix. The sequence is that of Cytochrome c oxidase subunit 2 (COX2) from Kluyveromyces lactis (strain ATCC 8585 / CBS 2359 / DSM 70799 / NBRC 1267 / NRRL Y-1140 / WM37) (Yeast).